The sequence spans 255 residues: Ribonuclease PH (255 aa).

Phosphate is bound by residues Arg-86 and 124-126 (GTR).

Belongs to the RNase PH family. Homohexameric ring arranged as a trimer of dimers.

The enzyme catalyses tRNA(n+1) + phosphate = tRNA(n) + a ribonucleoside 5'-diphosphate. Functionally, phosphorolytic 3'-5' exoribonuclease that plays an important role in tRNA 3'-end maturation. Removes nucleotide residues following the 3'-CCA terminus of tRNAs; can also add nucleotides to the ends of RNA molecules by using nucleoside diphosphates as substrates, but this may not be physiologically important. Probably plays a role in initiation of 16S rRNA degradation (leading to ribosome degradation) during starvation. The sequence is that of Ribonuclease PH from Aquifex aeolicus (strain VF5).